A 152-amino-acid chain; its full sequence is MRRCLRVKTRRGQLGLASGCFEQHSCFSPRVNRILSAVQNTPCAGPSSQAPPQPPQASPPAAPDHSRTPSLLASSHSASGGESLFQLYMASLAWPQNCCVLESCRRIPLGGLSSMENRRPLLRKGRLLRGQIHHGQDNQLWGLTGAGALLSG.

Positions 41 to 77 (TPCAGPSSQAPPQPPQASPPAAPDHSRTPSLLASSHS) are disordered. Positions 49-62 (QAPPQPPQASPPAA) are enriched in pro residues.

This chain is Smith-Magenis syndrome chromosomal region candidate gene 5 protein homolog (SMCR5), found in Macaca fascicularis (Crab-eating macaque).